The primary structure comprises 300 residues: Ribosomal protein bS6--L-glutamate ligase (300 aa).

An ATP-grasp domain is found at Met-104–Glu-287. Residues Lys-141, Glu-178–Tyr-179, Asp-187, and Arg-211–Asn-213 contribute to the ATP site. Asp-248, Glu-260, and Asn-262 together coordinate Mg(2+). The Mn(2+) site is built by Asp-248, Glu-260, and Asn-262.

This sequence belongs to the RimK family. Mg(2+) serves as cofactor. It depends on Mn(2+) as a cofactor.

Functionally, an L-glutamate ligase that catalyzes the ATP-dependent post-translational addition of glutamate residues to the C-terminus of ribosomal protein bS6 (RpsF). Is also able to catalyze the synthesis of poly-alpha-glutamate in vitro, via ATP hydrolysis from unprotected glutamate as substrate. The number of glutamate residues added to either RpsF or to poly-alpha-glutamate changes with pH. This Shigella boydii serotype 4 (strain Sb227) protein is Ribosomal protein bS6--L-glutamate ligase.